We begin with the raw amino-acid sequence, 473 residues long: GTPase Der (473 aa).

2 EngA-type G domains span residues 3–167 (FTVA…GKDR) and 203–378 (LRVA…RVWN). GTP-binding positions include 9 to 16 (GRPNVGKS), 56 to 60 (DTAGL), 119 to 122 (NKSE), 209 to 216 (GRPNAGKS), 256 to 260 (DTAGM), and 321 to 324 (NKWD). A KH-like domain is found at 379 to 463 (KRISTARLNR…PIRIHFRSPD (85 aa)).

The protein belongs to the TRAFAC class TrmE-Era-EngA-EngB-Septin-like GTPase superfamily. EngA (Der) GTPase family. Associates with the 50S ribosomal subunit.

Its function is as follows. GTPase that plays an essential role in the late steps of ribosome biogenesis. This chain is GTPase Der, found in Rhizobium etli (strain ATCC 51251 / DSM 11541 / JCM 21823 / NBRC 15573 / CFN 42).